We begin with the raw amino-acid sequence, 758 residues long: Spastin (758 aa).

Positions methionine 1–histidine 99 are disordered. Over methionine 1 to proline 121 the chain is Cytoplasmic. Positions methionine 1–alanine 210 are required for localization to punctate cytoplasmic foci. Composition is skewed to low complexity over residues serine 8–alanine 28, arginine 43–serine 58, serine 66–proline 76, and threonine 85–proline 95. Residues isoleucine 122–tyrosine 142 constitute an intramembrane region (helical). At leucine 143 to isoleucine 758 the chain is on the cytoplasmic side. 2 stretches are compositionally biased toward polar residues: residues serine 169–serine 180 and glutamine 189–glutamine 198. The disordered stretch occupies residues serine 169–isoleucine 203. The sufficient for interaction with microtubules and microtubule severing stretch occupies residues methionine 208–isoleucine 758. The 76-residue stretch at histidine 233–leucine 308 folds into the MIT domain. Disordered stretches follow at residues arginine 353 to lysine 375 and asparagine 390 to proline 454. 2 stretches are compositionally biased toward polar residues: residues asparagine 390–glycine 406 and glutamine 425–proline 454. The required for interaction with microtubules stretch occupies residues asparagine 443–valine 455. An ATP-binding site is contributed by glycine 523–threonine 530.

Belongs to the AAA ATPase family. Spastin subfamily. As to quaternary structure, homohexamer. The homohexamer is stabilized by ATP-binding. The homohexamer may adopt a ring conformation through which microtubules pass prior to being severed. Interacts with microtubules. Interacts with atl; may be involved in microtubule dynamics.

The protein localises to the membrane. The protein resides in the cytoplasm. It localises to the cytoskeleton. It is found in the microtubule organizing center. Its subcellular location is the centrosome. The protein localises to the chromosome. The protein resides in the lipid droplet. The catalysed reaction is n ATP + n H2O + a microtubule = n ADP + n phosphate + (n+1) alpha/beta tubulin heterodimers.. Functionally, ATP-dependent microtubule severing protein. Stimulates microtubule minus-end depolymerization and poleward microtubule flux in the mitotic spindle. Regulates microtubule stability in the neuromuscular junction synapse. Involved in lipid metabolism by regulating the size and distribution of lipid droplets. Involved in axon regeneration by regulating microtubule severing. The polypeptide is Spastin (Drosophila erecta (Fruit fly)).